The primary structure comprises 225 residues: MAEGETESPGPKKCGPYISSVTSQSVNLMIRGVVLFFIGVFLALVLNLLQIQRNVTLFPPDVIASIFSSAWWVPPCCGTASAVIGLLYPCIDRHLGEPHKFKREWSSVMRCVAVFVGINHASAKVDFDNNIQLSLTLAALSIGLWWTFDRSRSGFGLGVGIAFLATVVTQLLVYNGVYQYTSPDFLYVRSWLPCIFFAGGITMGNIGRQLAMYECKVIAEKSHQE.

Over 1 to 28 the chain is Cytoplasmic; the sequence is MAEGETESPGPKKCGPYISSVTSQSVNL. Residues 29-51 traverse the membrane as a helical segment; that stretch reads MIRGVVLFFIGVFLALVLNLLQI. Residues 52 to 70 lie on the Lumenal side of the membrane; the sequence is QRNVTLFPPDVIASIFSSA. The helical transmembrane segment at 71–88 threads the bilayer; that stretch reads WWVPPCCGTASAVIGLLY. Residues 89–103 are Cytoplasmic-facing; the sequence is PCIDRHLGEPHKFKR. A helical transmembrane segment spans residues 104–126; sequence EWSSVMRCVAVFVGINHASAKVD. At 127-129 the chain is on the lumenal side; it reads FDN. The helical transmembrane segment at 130 to 148 threads the bilayer; sequence NIQLSLTLAALSIGLWWTF. Residues 149–153 are Cytoplasmic-facing; that stretch reads DRSRS. At Ser-151 the chain carries Phosphoserine; by PCK1. Residues 154–175 form a helical membrane-spanning segment; that stretch reads GFGLGVGIAFLATVVTQLLVYN. Over 176–189 the chain is Lumenal; the sequence is GVYQYTSPDFLYVR. The chain crosses the membrane as a helical span at residues 190-207; that stretch reads SWLPCIFFAGGITMGNIG. At 208 to 225 the chain is on the cytoplasmic side; it reads RQLAMYECKVIAEKSHQE. Cys-215 is modified (cysteine sulfenic acid (-SOH); alternate). Residue Cys-215 forms a Glycyl cysteine thioester (Cys-Gly) (interchain with G-Cter in ubiquitin); alternate linkage. A KxHxx motif is present at residues 219–225; sequence AEKSHQE.

Belongs to the INSIG family. In terms of assembly, interacts with SCAP; interaction is direct and only takes place in the presence of sterols; it prevents interaction between SCAP and the coat protein complex II (COPII). Associates with the SCAP-SREBP complex (composed of SCAP and SREBF1/SREBP1 or SREBF2/SREBP2); association is mediated via its interaction with SCAP and only takes place in the presence of sterols. Interacts with RNF139. Interacts with RNF145. In terms of processing, phosphorylation at Ser-151 by PCK1 reduces binding to oxysterol, disrupting the interaction between INSIG2 and SCAP, thereby promoting nuclear translocation of SREBP proteins (SREBF1/SREBP1 or SREBF2/SREBP2) and subsequent transcription of downstream lipogenesis-related genes. Polyubiquitinated by AMFR/gp78 at Cys-215 in some tissues such as adipose tissues, undifferentiated myoblasts and liver, leading to its degradation. In differentiated myotubes, Cys-215 oxidation prevents ubiquitination at the same site, resulting in protein stabilization. Post-translationally, oxidized at Cys-215 in differentiated myotubes, preventing ubiquitination at the same site, and resulting in protein stabilization.

The protein resides in the endoplasmic reticulum membrane. Oxysterol-binding protein that mediates feedback control of cholesterol synthesis by controlling both endoplasmic reticulum to Golgi transport of SCAP and degradation of HMGCR. Acts as a negative regulator of cholesterol biosynthesis by mediating the retention of the SCAP-SREBP complex in the endoplasmic reticulum, thereby blocking the processing of sterol regulatory element-binding proteins (SREBPs) SREBF1/SREBP1 and SREBF2/SREBP2. Binds oxysterol, including 22-hydroxycholesterol, 24-hydroxycholesterol, 25-hydroxycholesterol and 27-hydroxycholesterol, regulating interaction with SCAP and retention of the SCAP-SREBP complex in the endoplasmic reticulum. In presence of oxysterol, interacts with SCAP, retaining the SCAP-SREBP complex in the endoplasmic reticulum, thereby preventing SCAP from escorting SREBF1/SREBP1 and SREBF2/SREBP2 to the Golgi. Sterol deprivation or phosphorylation by PCK1 reduce oxysterol-binding, disrupting the interaction between INSIG2 and SCAP, thereby promoting Golgi transport of the SCAP-SREBP complex, followed by processing and nuclear translocation of SREBF1/SREBP1 and SREBF2/SREBP2. Also regulates cholesterol synthesis by regulating degradation of HMGCR: initiates the sterol-mediated ubiquitin-mediated endoplasmic reticulum-associated degradation (ERAD) of HMGCR via recruitment of the reductase to the ubiquitin ligase RNF139. The protein is Insulin-induced gene 2 protein of Homo sapiens (Human).